The chain runs to 261 residues: Ribosomal RNA small subunit methyltransferase J (261 aa).

S-adenosyl-L-methionine is bound by residues 101–102 (RD), 117–118 (ER), 153–154 (SS), and Asp176.

This sequence belongs to the methyltransferase superfamily. RsmJ family.

It is found in the cytoplasm. The enzyme catalyses guanosine(1516) in 16S rRNA + S-adenosyl-L-methionine = N(2)-methylguanosine(1516) in 16S rRNA + S-adenosyl-L-homocysteine + H(+). In terms of biological role, specifically methylates the guanosine in position 1516 of 16S rRNA. The protein is Ribosomal RNA small subunit methyltransferase J of Vibrio cholerae serotype O1 (strain ATCC 39315 / El Tor Inaba N16961).